The chain runs to 259 residues: Small ribosomal subunit protein uS2 (259 aa).

It belongs to the universal ribosomal protein uS2 family.

The sequence is that of Small ribosomal subunit protein uS2 from Streptococcus pneumoniae (strain 70585).